The following is a 1883-amino-acid chain: Lysophospholipase NTE1 (1883 aa).

The Cytoplasmic segment spans residues 1 to 75 (MSQVPVASPA…LLRVVLASLN (75 aa)). A helical membrane pass occupies residues 76-96 (LIRILATFSTITVPSLVYAIL). The Lumenal segment spans residues 97-103 (HYSLTLQ). A helical transmembrane segment spans residues 104 to 124 (LNFPSLALLFLTSLISAFIWL). At 125 to 1883 (RYRHLNKYER…AGISARRNSI (1759 aa)) the chain is on the cytoplasmic side. 6 disordered regions span residues 284-327 (HLAP…FNPP), 355-410 (ERLG…LYHA), 618-693 (SQRS…MVGP), 716-764 (SAQP…RKGS), 921-1069 (EEDR…ATNS), and 1084-1108 (LHQQ…GKRS). Residues 311 to 327 (NNATAPTSPYSSAFNPP) show a composition bias toward polar residues. Residues 372–383 (ARTASSGTASAT) show a composition bias toward low complexity. Polar residues predominate over residues 650–668 (PSLTTSSKQSNQKPTSSRI). A nucleoside 3',5'-cyclic phosphate contacts are provided by residues 863-1158 (AGHG…RRPI) and 1166-1285 (RLLS…IARR). A compositionally biased stretch (polar residues) spans 936–948 (TDASSGSSRQNRP). Basic and acidic residues predominate over residues 964–974 (LLDERNLREAD). Polar residues-rich tracts occupy residues 988-998 (ISSNGDGNSGS) and 1084-1100 (LHQQ…QSSQ). One can recognise a PNPLA domain in the interval 1544-1708 (LVLGGGGARG…VDNLPVTVML (165 aa)). The short motif at 1548–1553 (GGGARG) is the GXGXXG element. Residues 1575 to 1579 (GTSIG) carry the GXSXG motif. Catalysis depends on serine 1577, which acts as the Nucleophile. Residue aspartate 1695 is the Proton acceptor of the active site. The DGA/G signature appears at 1695 to 1697 (DGG). The interval 1852-1883 (DESGVGGGVRKIRKKRRRTRRKAGISARRNSI) is disordered. Residues 1861 to 1874 (RKIRKKRRRTRRKA) show a composition bias toward basic residues.

This sequence belongs to the NTE family.

The protein resides in the endoplasmic reticulum membrane. The enzyme catalyses a 1-acyl-sn-glycero-3-phosphocholine + H2O = sn-glycerol 3-phosphocholine + a fatty acid + H(+). Its activity is regulated as follows. Inhibited by organophosphorus esters. Intracellular phospholipase B that catalyzes the double deacylation of phosphatidylcholine (PC) to glycerophosphocholine (GroPCho). Plays an important role in membrane lipid homeostasis. Responsible for the rapid PC turnover in response to inositol, elevated temperatures, or when choline is present in the growth medium. The protein is Lysophospholipase NTE1 (NTE1) of Mycosarcoma maydis (Corn smut fungus).